Here is a 191-residue protein sequence, read N- to C-terminus: Small ribosomal subunit protein uS10c (191 aa).

A chloroplast-targeting transit peptide spans 1 to 56 (MAVSTVSSFLLPSFGIPSSSPSSTRLKVSLLPSSSTHGGLSSCVLTKPSVSLTKVF).

This sequence belongs to the universal ribosomal protein uS10 family. As to quaternary structure, part of the 30S ribosomal subunit.

It localises to the plastid. The protein localises to the chloroplast. This Arabidopsis thaliana (Mouse-ear cress) protein is Small ribosomal subunit protein uS10c (RPS10).